The sequence spans 543 residues: Kelch repeat and BTB domain-containing protein 4 (543 aa).

Residues 70-137 (ADVTISVEGR…IYHGTVKLRA (68 aa)) enclose the BTB domain. Residues 172-264 (CLQVMWLADR…SLKEIGENVH (93 aa)) form the BACK domain. Kelch repeat units follow at residues 264 to 310 (HIYL…KHGG), 311 to 353 (DLYV…SVPG), 356 to 403 (AIYS…NLNG), 405 to 455 (IYLL…VHKD), and 457 to 505 (VFIV…YVFR).

As to quaternary structure, component of the BCR(KBTBD4) E3 ubiquitin ligase complex, at least composed of CUL3, KBTBD4 and RBX1.

In terms of biological role, substrate-specific adapter of a BCR (BTB-CUL3-RBX1) E3 ubiquitin ligase complex which targets CoREST corepressor complex components RCOR1, KDM1A/LSD1 and HDAC2 for proteasomal degradation. RCOR1 is likely to be the primary target while degradation of KDM1A and HDAC2 is likely due to their association with RCOR1. Also targets RCOR3, MIER2 and MIER3 for proteasomal degradation as well as associated proteins ZNF217 and RREB1. Degradation is dependent on the presence of an ELM2 domain in the target proteins. This chain is Kelch repeat and BTB domain-containing protein 4 (KBTBD4), found in Macaca fascicularis (Crab-eating macaque).